Consider the following 425-residue polypeptide: UDP-N-acetylglucosamine 1-carboxyvinyltransferase (425 aa).

25–26 lines the phosphoenolpyruvate pocket; it reads KN. Arg95 lines the UDP-N-acetyl-alpha-D-glucosamine pocket. Cys119 (proton donor) is an active-site residue. A 2-(S-cysteinyl)pyruvic acid O-phosphothioketal modification is found at Cys119. UDP-N-acetyl-alpha-D-glucosamine contacts are provided by residues 124-128, Asp306, and Ile328; that span reads RPVDQ.

It belongs to the EPSP synthase family. MurA subfamily.

The protein resides in the cytoplasm. It carries out the reaction phosphoenolpyruvate + UDP-N-acetyl-alpha-D-glucosamine = UDP-N-acetyl-3-O-(1-carboxyvinyl)-alpha-D-glucosamine + phosphate. It functions in the pathway cell wall biogenesis; peptidoglycan biosynthesis. In terms of biological role, cell wall formation. Adds enolpyruvyl to UDP-N-acetylglucosamine. This chain is UDP-N-acetylglucosamine 1-carboxyvinyltransferase, found in Thermus thermophilus (strain ATCC 27634 / DSM 579 / HB8).